A 97-amino-acid polypeptide reads, in one-letter code: Large ribosomal subunit protein bL27 (97 aa).

A propeptide spanning residues 1-12 is cleaved from the precursor; it reads MLKMNLANLQLF. Positions 14-37 are disordered; sequence HKKGGGSTSNGRDSQAKRLGAKAA.

The protein belongs to the bacterial ribosomal protein bL27 family. In terms of processing, the N-terminus is cleaved by ribosomal processing cysteine protease Prp.

The chain is Large ribosomal subunit protein bL27 from Streptococcus gordonii (strain Challis / ATCC 35105 / BCRC 15272 / CH1 / DL1 / V288).